A 449-amino-acid chain; its full sequence is Glycoprotein endo-alpha-1,2-mannosidase (449 aa).

Residues 1-8 are Cytoplasmic-facing; that stretch reads MIRFRRRT. A helical; Signal-anchor for type II membrane protein membrane pass occupies residues 9–29; it reads CITLSIFIFLVCLIMAGLKHL. Over 30–449 the chain is Lumenal; sequence RPENAAFGSP…YMKEKEHWLV (420 aa). A catalytic region spans residues 59 to 449; it reads DSENHLKGNT…YMKEKEHWLV (391 aa).

The protein belongs to the glycosyl hydrolase 99 family.

It is found in the golgi apparatus membrane. It carries out the reaction N-{alpha-Glc-(1-&gt;3)-alpha-Man-(1-&gt;2)-alpha-Man-(1-&gt;2)-alpha-Man-(1-&gt;3)-[alpha-Man-(1-&gt;2)-alpha-Man-(1-&gt;3)-[alpha-Man-(1-&gt;2)-alpha-Man-(1-&gt;6)]-alpha-Man-(1-&gt;6)]-beta-Man-(1-&gt;4)-beta-GlcNAc-(1-&gt;4)-beta-GlcNAc}-L-asparaginyl-[protein] + H2O = alpha-D-glucosyl-(1-&gt;3)-D-mannopyranose + N(4)-{alpha-D-Man-(1-&gt;2)-alpha-D-Man-(1-&gt;3)-[alpha-D-Man-(1-&gt;2)-alpha-D-Man-(1-&gt;3)-[alpha-D-Man-(1-&gt;2)-alpha-D-Man-(1-&gt;6)]-alpha-D-Man-(1-&gt;6)]-beta-D-Man-(1-&gt;4)-beta-D-GlaNAc-(1-&gt;4)-beta-D-GlcNAc}-L-asparaginyl-[protein] (N-glucan mannose isomer 8A1,2,3B1,2). In Xenopus laevis (African clawed frog), this protein is Glycoprotein endo-alpha-1,2-mannosidase (manea).